We begin with the raw amino-acid sequence, 706 residues long: DNA ligase (706 aa).

The disordered stretch occupies residues 1–20 (MSATAGTADESGVASAAASA). NAD(+) is bound by residues 50–54 (DAEYD), 99–100 (SL), and Glu128. Lys130 functions as the N6-AMP-lysine intermediate in the catalytic mechanism. NAD(+) is bound by residues Arg151, Glu188, Lys304, and Lys328. Residues Cys422, Cys425, Cys440, and Cys446 each coordinate Zn(2+). The BRCT domain occupies 604–694 (EGPRPLDGVT…VDAASKLAVP (91 aa)).

Belongs to the NAD-dependent DNA ligase family. LigA subfamily. Requires Mg(2+) as cofactor. It depends on Mn(2+) as a cofactor.

It carries out the reaction NAD(+) + (deoxyribonucleotide)n-3'-hydroxyl + 5'-phospho-(deoxyribonucleotide)m = (deoxyribonucleotide)n+m + AMP + beta-nicotinamide D-nucleotide.. DNA ligase that catalyzes the formation of phosphodiester linkages between 5'-phosphoryl and 3'-hydroxyl groups in double-stranded DNA using NAD as a coenzyme and as the energy source for the reaction. It is essential for DNA replication and repair of damaged DNA. In Frankia casuarinae (strain DSM 45818 / CECT 9043 / HFP020203 / CcI3), this protein is DNA ligase.